The sequence spans 93 residues: Large ribosomal subunit protein uL23 (93 aa).

This sequence belongs to the universal ribosomal protein uL23 family. In terms of assembly, part of the 50S ribosomal subunit. Contacts protein L29, and trigger factor when it is bound to the ribosome.

In terms of biological role, one of the early assembly proteins it binds 23S rRNA. One of the proteins that surrounds the polypeptide exit tunnel on the outside of the ribosome. Forms the main docking site for trigger factor binding to the ribosome. In Opitutus terrae (strain DSM 11246 / JCM 15787 / PB90-1), this protein is Large ribosomal subunit protein uL23.